Consider the following 388-residue polypeptide: Acetate kinase (388 aa).

Residue Asn8 participates in Mg(2+) binding. Lys15 is a binding site for ATP. Arg88 contributes to the substrate binding site. Asp144 acts as the Proton donor/acceptor in catalysis. Residues 202-206 (HLGNG), 276-278 (DMR), and 321-325 (GVGEN) contribute to the ATP site. Glu375 serves as a coordination point for Mg(2+).

The protein belongs to the acetokinase family. As to quaternary structure, homodimer. The cofactor is Mg(2+). Mn(2+) is required as a cofactor.

The protein resides in the cytoplasm. The catalysed reaction is acetate + ATP = acetyl phosphate + ADP. The protein operates within metabolic intermediate biosynthesis; acetyl-CoA biosynthesis; acetyl-CoA from acetate: step 1/2. Its function is as follows. Catalyzes the formation of acetyl phosphate from acetate and ATP. Can also catalyze the reverse reaction. This Mycoplasmoides gallisepticum (strain R(low / passage 15 / clone 2)) (Mycoplasma gallisepticum) protein is Acetate kinase.